Here is a 271-residue protein sequence, read N- to C-terminus: RxLR effector protein PITG_15679 (271 aa).

An N-terminal signal peptide occupies residues 1–18 (MKVLQLIALTALVSSCVA). The RxLR-dEER motif lies at 49 to 69 (RSLRRYDLEGLDSVNSNREER). Residues 212 to 271 (RLLSANVVMRLNDKGEKQILLISSSNPKKGDFLLPKGGWDKGEDVKKAALREVIEEGGVR) enclose the Nudix hydrolase domain. Positions 248-269 (GGWDKGEDVKKAALREVIEEGG) match the Nudix box motif.

It in the N-terminal section; belongs to the RxLR effector family. The protein in the C-terminal section; belongs to the Nudix hydrolase family.

It is found in the secreted. Its subcellular location is the host cytoplasm. It localises to the host nucleus. Functionally, effector that enhances P.infestans colonization of Nicotiana benthamiana leaves. The protein is RxLR effector protein PITG_15679 of Phytophthora infestans (strain T30-4) (Potato late blight agent).